The sequence spans 106 residues: BLOC-1-related complex subunit 7 (106 aa).

It belongs to the BORCS7 family. As to quaternary structure, component of the BLOC-one-related complex (BORC) which is composed of BLOC1S1, BLOC1S2, BORCS5, BORCS6, BORCS7, BORCS8, KXD1 and SNAPIN.

Its subcellular location is the lysosome membrane. In terms of biological role, as part of the BORC complex may play a role in lysosomes movement and localization at the cell periphery. Associated with the cytosolic face of lysosomes, the BORC complex may recruit ARL8B and couple lysosomes to microtubule plus-end-directed kinesin motor. The polypeptide is BLOC-1-related complex subunit 7 (Homo sapiens (Human)).